A 205-amino-acid polypeptide reads, in one-letter code: Dr1-associated corepressor (205 aa).

The 64-residue stretch at 14–77 (PARIKKIMQT…SHLKQCIELE (64 aa)) folds into the Histone-fold domain. Residues 91-205 (PDMQGDGEDN…DEEDEEDYDS (115 aa)) form a disordered region. Basic and acidic residues predominate over residues 98–108 (EDNHMDGDKGA). Over residues 114–125 (PGSGGRKNGGMG) the composition is skewed to gly residues. Positions 138–155 (SEQEDESEDTDTDGEEET) are enriched in acidic residues. Pro residues predominate over residues 184–193 (PLPPAPPGPS). A compositionally biased stretch (acidic residues) spans 195–205 (PDEEDEEDYDS).

It belongs to the NC2 alpha/DRAP1 family. In terms of assembly, heterodimer with DR1. Binds BTAF1. Phosphorylation reduces DNA binding, but has no effect on heterodimerization and TBP binding. As to expression, ubiquitous. Highly expressed in adult testis, heart, skeletal muscle, pancreas and brain, and in fetal brain, liver and kidney.

The protein localises to the nucleus. Functionally, the association of the DR1/DRAP1 heterodimer with TBP results in a functional repression of both activated and basal transcription of class II genes. This interaction precludes the formation of a transcription-competent complex by inhibiting the association of TFIIA and/or TFIIB with TBP. Can bind to DNA on its own. The sequence is that of Dr1-associated corepressor (DRAP1) from Homo sapiens (Human).